Reading from the N-terminus, the 78-residue chain is Structural DNA-binding protein p10 (78 aa).

Positions 1-27 (MPTKAGTKSTANKKTTKGSSKSGSSRG) are enriched in low complexity. Positions 1–41 (MPTKAGTKSTANKKTTKGSSKSGSSRGHTGKTHASSSMHSG) are disordered.

This sequence belongs to the asfivirus P10 family.

The protein localises to the virion. Its function is as follows. May play a role in genome packaging through direct interaction with viral DNA. Binds to ssDNA and dsDNA with the same apparent affinity in vitro. The protein is Structural DNA-binding protein p10 of African swine fever virus (strain Badajoz 1971 Vero-adapted) (Ba71V).